A 150-amino-acid chain; its full sequence is Testis-expressed protein 22 (150 aa).

Over residues 1–23 the composition is skewed to basic and acidic residues; sequence MDSRKLSPRGKKLESHLSQEHRR. The interval 1 to 26 is disordered; sequence MDSRKLSPRGKKLESHLSQEHRRPPL.

It localises to the cytoplasm. The protein localises to the cytoplasmic vesicle. Its subcellular location is the secretory vesicle. It is found in the acrosome. The sequence is that of Testis-expressed protein 22 (TEX22) from Homo sapiens (Human).